The primary structure comprises 235 residues: Glucosamine-6-phosphate deaminase (235 aa).

Asp62 serves as the catalytic Proton acceptor; for enolization step. Residue Asn128 is the For ring-opening step of the active site. Catalysis depends on His130, which acts as the Proton acceptor; for ring-opening step. The active-site For ring-opening step is Glu135.

This sequence belongs to the glucosamine/galactosamine-6-phosphate isomerase family. NagB subfamily.

The catalysed reaction is alpha-D-glucosamine 6-phosphate + H2O = beta-D-fructose 6-phosphate + NH4(+). It participates in amino-sugar metabolism; N-acetylneuraminate degradation; D-fructose 6-phosphate from N-acetylneuraminate: step 5/5. Catalyzes the reversible isomerization-deamination of glucosamine 6-phosphate (GlcN6P) to form fructose 6-phosphate (Fru6P) and ammonium ion. In Streptococcus sanguinis (strain SK36), this protein is Glucosamine-6-phosphate deaminase.